Here is a 239-residue protein sequence, read N- to C-terminus: Ribose-5-phosphate isomerase A (239 aa).

Residues 39–42 (SGST), 95–98 (DGAD), and 108–111 (KGGG) contribute to the substrate site. The active-site Proton acceptor is E117. K135 provides a ligand contact to substrate.

Belongs to the ribose 5-phosphate isomerase family. Homodimer.

The catalysed reaction is aldehydo-D-ribose 5-phosphate = D-ribulose 5-phosphate. Its pathway is carbohydrate degradation; pentose phosphate pathway; D-ribose 5-phosphate from D-ribulose 5-phosphate (non-oxidative stage): step 1/1. In terms of biological role, catalyzes the reversible conversion of ribose-5-phosphate to ribulose 5-phosphate. In Chlamydia muridarum (strain MoPn / Nigg), this protein is Ribose-5-phosphate isomerase A.